The sequence spans 202 residues: Syndecan-4 (202 aa).

The first 23 residues, 1-23 (MAPVCLFAPLLLLLLGGFPVAPG), serve as a signal peptide directing secretion. Topologically, residues 24 to 149 (ESIRETEVID…QGSNIFERTE (126 aa)) are extracellular. 2 disordered regions span residues 42–76 (YFSG…TEEP) and 89–138 (LDNH…MSST). Ser-44 is a glycosylation site (O-linked (Xyl...) (glycosaminoglycan) serine). A compositionally biased stretch (acidic residues) spans 48-62 (PDDEDAGGLEQDSDF). Residues Ser-65 and Ser-67 are each glycosylated (O-linked (Xyl...) (glycosaminoglycan) serine). Residues 105-121 (SEPKELEENEVIPKRVP) show a composition bias toward basic and acidic residues. Residues 150–174 (VLAALIVGGVVGILFAVFLILLLVY) form a helical membrane-spanning segment. Residues 175–202 (RMKKKDEGSYDLGKKPIYKKAPTNEFYA) lie on the Cytoplasmic side of the membrane.

It belongs to the syndecan proteoglycan family. Homodimer. Interacts with CDCP1 and SDCBP. Interacts (via its cytoplasmic domain) with GIPC (via its PDZ domain). Interacts (via its cytoplasmic domain) with NUDT16L1. Interacts with DNM2; this interaction is markedly enhanced at focal ahesion site upon induction of focal adhesions and stress-fiber formation. In terms of processing, shedding is enhanced by a number of factors such as heparanase, thrombin or EGF. Also by stress and wound healing. PMA-mediated shedding is inhibited by TIMP3. O-glycosylated; contains both chondroitin sulfate and heparan sulfate. Ser-44, Ser-65 and Ser-67 can all be modified by either chondroitin sulfate or heparan sulfate, and the protein exists in forms that contain only chondroitin sulfate, only heparan sulfate and both chondroitin sulfate and heparan sulfate.

The protein resides in the membrane. The protein localises to the secreted. In terms of biological role, cell surface proteoglycan which regulates exosome biogenesis in concert with SDCBP and PDCD6IP. In Rattus norvegicus (Rat), this protein is Syndecan-4.